A 102-amino-acid chain; its full sequence is PqqA binding protein (102 aa).

It belongs to the PqqD family. Monomer. Interacts with PqqE.

It functions in the pathway cofactor biosynthesis; pyrroloquinoline quinone biosynthesis. Functions as a PqqA binding protein and presents PqqA to PqqE, in the pyrroloquinoline quinone (PQQ) biosynthetic pathway. This Rhodopseudomonas palustris (strain BisB5) protein is PqqA binding protein.